A 131-amino-acid polypeptide reads, in one-letter code: Small ribosomal subunit protein bS16 (131 aa).

Residues 87–131 form a disordered region; the sequence is PGAEGTYRVPTANTKPPRIPGGGAAKAVEAPAEAPAEAETPASES. Residues 111–131 show a composition bias toward low complexity; sequence AKAVEAPAEAPAEAETPASES.

Belongs to the bacterial ribosomal protein bS16 family.

The polypeptide is Small ribosomal subunit protein bS16 (Kineococcus radiotolerans (strain ATCC BAA-149 / DSM 14245 / SRS30216)).